A 283-amino-acid chain; its full sequence is Protein/nucleic acid deglycase HchA (283 aa).

Residues histidine 86, glutamate 91, and histidine 123 each contribute to the Zn(2+) site. Cysteine 185 acts as the Nucleophile in catalysis.

It belongs to the peptidase C56 family. HchA subfamily. In terms of assembly, homodimer.

It is found in the cytoplasm. The catalysed reaction is N(omega)-(1-hydroxy-2-oxopropyl)-L-arginyl-[protein] + H2O = lactate + L-arginyl-[protein] + H(+). It carries out the reaction N(6)-(1-hydroxy-2-oxopropyl)-L-lysyl-[protein] + H2O = lactate + L-lysyl-[protein] + H(+). It catalyses the reaction S-(1-hydroxy-2-oxopropyl)-L-cysteinyl-[protein] + H2O = lactate + L-cysteinyl-[protein] + H(+). The enzyme catalyses N(omega)-(1-hydroxy-2-oxoethyl)-L-arginyl-[protein] + H2O = L-arginyl-[protein] + glycolate + H(+). The catalysed reaction is N(6)-(1-hydroxy-2-oxoethyl)-L-lysyl-[protein] + H2O = glycolate + L-lysyl-[protein] + H(+). It carries out the reaction S-(1-hydroxy-2-oxoethyl)-L-cysteinyl-[protein] + H2O = glycolate + L-cysteinyl-[protein] + H(+). It catalyses the reaction N(2)-(1-hydroxy-2-oxopropyl)-dGTP + H2O = lactate + dGTP + H(+). The enzyme catalyses N(2)-(1-hydroxy-2-oxopropyl)-GTP + H2O = lactate + GTP + H(+). The catalysed reaction is N(2)-(1-hydroxy-2-oxopropyl)-GDP + H2O = lactate + GDP + H(+). It carries out the reaction N(2)-(1-hydroxy-2-oxopropyl)-GMP + H2O = lactate + GMP + H(+). It catalyses the reaction N(2)-(1-hydroxy-2-oxoethyl)-dGTP + H2O = dGTP + glycolate + H(+). The enzyme catalyses N(2)-(1-hydroxy-2-oxoethyl)-GTP + H2O = glycolate + GTP + H(+). The catalysed reaction is N(2)-(1-hydroxy-2-oxoethyl)-GDP + H2O = glycolate + GDP + H(+). It carries out the reaction N(2)-(1-hydroxy-2-oxoethyl)-GMP + H2O = glycolate + GMP + H(+). It catalyses the reaction an N(2)-(1-hydroxy-2-oxopropyl)-guanosine in RNA + H2O = a guanosine in RNA + lactate + H(+). The enzyme catalyses an N(2)-(1-hydroxy-2-oxopropyl)-2'-deoxyguanosine in DNA + H2O = a 2'-deoxyguanosine in DNA + lactate + H(+). The catalysed reaction is an N(2)-(1-hydroxy-2-oxoethyl)-guanosine in RNA + H2O = a guanosine in RNA + glycolate + H(+). It carries out the reaction an N(2)-(1-hydroxy-2-oxoethyl)-2'-deoxyguanosine in DNA + H2O = a 2'-deoxyguanosine in DNA + glycolate + H(+). Functionally, protein and nucleotide deglycase that catalyzes the deglycation of the Maillard adducts formed between amino groups of proteins or nucleotides and reactive carbonyl groups of glyoxals. Thus, functions as a protein deglycase that repairs methylglyoxal- and glyoxal-glycated proteins, and releases repaired proteins and lactate or glycolate, respectively. Deglycates cysteine, arginine and lysine residues in proteins, and thus reactivates these proteins by reversing glycation by glyoxals. Acts on early glycation intermediates (hemithioacetals and aminocarbinols), preventing the formation of Schiff bases and advanced glycation endproducts (AGE). Also functions as a nucleotide deglycase able to repair glycated guanine in the free nucleotide pool (GTP, GDP, GMP, dGTP) and in DNA and RNA. Is thus involved in a major nucleotide repair system named guanine glycation repair (GG repair), dedicated to reversing methylglyoxal and glyoxal damage via nucleotide sanitization and direct nucleic acid repair. Plays an important role in protecting cells from carbonyl stress. The chain is Protein/nucleic acid deglycase HchA from Escherichia coli (strain 55989 / EAEC).